The primary structure comprises 469 residues: Arginine biosynthesis bifunctional protein ArgJ, chloroplastic (469 aa).

The substrate site is built by threonine 213, lysine 239, threonine 250, glutamate 337, asparagine 464, and threonine 469. Residue threonine 250 is the Nucleophile of the active site.

This sequence belongs to the ArgJ family. As to quaternary structure, heterodimer of an alpha and a beta chain.

Its subcellular location is the plastid. It is found in the chloroplast. The catalysed reaction is N(2)-acetyl-L-ornithine + L-glutamate = N-acetyl-L-glutamate + L-ornithine. It carries out the reaction L-glutamate + acetyl-CoA = N-acetyl-L-glutamate + CoA + H(+). Its pathway is amino-acid biosynthesis; L-arginine biosynthesis; L-ornithine and N-acetyl-L-glutamate from L-glutamate and N(2)-acetyl-L-ornithine (cyclic): step 1/1. It functions in the pathway amino-acid biosynthesis; L-arginine biosynthesis; N(2)-acetyl-L-ornithine from L-glutamate: step 1/4. In terms of biological role, catalyzes two activities which are involved in the cyclic version of arginine biosynthesis: the synthesis of acetylglutamate from glutamate and acetyl-CoA, and of ornithine by transacetylation between acetylornithine and glutamate. This is Arginine biosynthesis bifunctional protein ArgJ, chloroplastic from Ricinus communis (Castor bean).